Here is a 512-residue protein sequence, read N- to C-terminus: MSEIKEARLQKARSLVSKGFASYAQSFKVSNTTSFLLQEFDYLENGQEADFSVSVAGRVLAKRVMGKIAFFTISDQEGQIQLYLDKRIINLNLEKQKLLSFEDIKEIVDIGDWIGVYGTIKKTNKGELSIKVEKWEMLSKSLQPLPDKWHGLTDIEKRYRQRYLDLIVNPHSKNVFKTRAKCISFIRKWLDNRNFLEIETPILQSEAGGAEARPFITHHNTLDIPLYLRIATELHLKRMVVGGFEKVYEMGRIFRNEGISTRHNPEFTSVEIYEAYSDYFDMMNLTEELIKDVVADSCGSLIINYQNKEIDFSKPWLRISMKDIVKKYTGIDFDSFSGDFLAAKQAVKNINVDLSNKVNTMGRLLNEVFEQKVESKLIEPTFVIDYPVEISPLARPHFDNKEIVQRFELFIVGRELANAFSELIDPVDQRERMQLQQSLRDEGDLEAHCIDEDFLNALEIGMPPTGGLGIGIDRLIMLITNSASIRDVIPFPLLKPEITSKKSEKLPLNEVK.

Positions 408 and 415 each coordinate Mg(2+).

This sequence belongs to the class-II aminoacyl-tRNA synthetase family. In terms of assembly, homodimer. Mg(2+) serves as cofactor.

The protein resides in the cytoplasm. The catalysed reaction is tRNA(Lys) + L-lysine + ATP = L-lysyl-tRNA(Lys) + AMP + diphosphate. The protein is Lysine--tRNA ligase of Prochlorococcus marinus (strain MIT 9215).